The chain runs to 1230 residues: ABC transporter B family member 5 (1230 aa).

The next 6 membrane-spanning stretches (helical) occupy residues 27–47 (VLLM…SPLM), 78–98 (LVYL…CWMI), 154–174 (FIQL…RGWL), 177–197 (LVML…AIIV), 253–273 (GFVT…TYAL), and 286–306 (GYTG…SIAL). One can recognise an ABC transmembrane type-1 1 domain in the interval 30–318 (MIVGSIGAIA…ASPCLTAFTA (289 aa)). Positions 353–589 (IELRDVCFSY…HEGAYSQLLR (237 aa)) constitute an ABC transporter 1 domain. 388–395 (GESGSGKS) lines the ATP pocket. N540, N615, and N616 each carry an N-linked (GlcNAc...) asparagine glycan. Residues 602-621 (ISDGSISSGSSRGNNSTRQD) form a disordered region. A compositionally biased stretch (low complexity) spans 603-617 (SDGSISSGSSRGNNS). 2 helical membrane passes run 662 to 682 (ILIL…IFGI) and 707 to 727 (MIFV…NYLF). Positions 663–950 (LILGTLVGAV…ASSFAPDSSK (288 aa)) constitute an ABC transmembrane type-1 2 domain. A glycan (N-linked (GlcNAc...) asparagine) is linked at N759. Transmembrane regions (helical) follow at residues 798–818 (IIAF…IPFI), 889–909 (GVGF…CFYV), and 924–944 (VFQV…ASSF). One can recognise an ABC transporter 2 domain in the interval 985-1223 (IELCHISFTY…EGGVYASLVQ (239 aa)). Residue 1020-1027 (GESGSGKS) coordinates ATP. 3 N-linked (GlcNAc...) asparagine glycosylation sites follow: N1074, N1174, and N1227.

This sequence belongs to the ABC transporter superfamily. ABCB family. Multidrug resistance exporter (TC 3.A.1.201) subfamily.

The protein resides in the membrane. The sequence is that of ABC transporter B family member 5 (ABCB5) from Arabidopsis thaliana (Mouse-ear cress).